The following is a 644-amino-acid chain: Phosphatidylinositol polyphosphate 5-phosphatase type IV (644 aa).

The tract at residues 1-193 is disordered; that stretch reads MPSKAENLRP…RLPSLLPPRP (193 aa). Tandem repeats lie at residues 10 to 13, 15 to 18, 28 to 31, 39 to 42, 55 to 58, 69 to 71, 72 to 74, and 75 to 78. The tract at residues 10-242 is 13 X 4 AA repeats of P-X-X-P; the sequence is PSEPAPQPPE…SLGPGRPRSP (233 aa). Residues 78-90 show a composition bias toward basic and acidic residues; that stretch reads PRLERALSLDDKG. Ser99 bears the Phosphoserine mark. Residues 107 to 118 show a composition bias toward polar residues; sequence NGTSPSRGSVQS. Residues 121 to 124 form repeat 9; sequence PGAP. Residues 152 to 163 show a composition bias toward low complexity; the sequence is GSPSSGGNPLSG. Repeat copies occupy residues 169-172, 183-185, 190-193, and 236-239. Phosphoserine occurs at positions 241 and 256. The residue at position 641 (Cys641) is a Cysteine methyl ester. The S-farnesyl cysteine moiety is linked to residue Cys641. A propeptide spans 642-644 (removed in mature form); the sequence is SVS.

This sequence belongs to the inositol 1,4,5-trisphosphate 5-phosphatase type IV family. Interacts (when prenylated) with PDE6D; this is important for normal location in cilia. As to expression, detected in brain, heart, pancreas, testis and spleen.

The protein resides in the cytoplasm. Its subcellular location is the cytoskeleton. It localises to the cilium axoneme. It is found in the golgi apparatus. The protein localises to the golgi stack membrane. The protein resides in the cell membrane. Its subcellular location is the cell projection. It localises to the ruffle. It is found in the nucleus. It carries out the reaction a 1,2-diacyl-sn-glycero-3-phospho-(1D-myo-inositol-4,5-bisphosphate) + H2O = a 1,2-diacyl-sn-glycero-3-phospho-(1D-myo-inositol 4-phosphate) + phosphate. The enzyme catalyses a 1,2-diacyl-sn-glycero-3-phospho-(1D-myo-inositol-3,4,5-trisphosphate) + H2O = a 1,2-diacyl-sn-glycero-3-phospho-(1D-myo-inositol-3,4-bisphosphate) + phosphate. The catalysed reaction is a 1,2-diacyl-sn-glycero-3-phospho-(1D-myo-inositol-3,5-bisphosphate) + H2O = a 1,2-diacyl-sn-glycero-3-phospho-(1D-myo-inositol-3-phosphate) + phosphate. Its activity is regulated as follows. Active in the presence of octyl-glucoside or Triton X-100, but completely inhibited by CTAB. In terms of biological role, phosphatidylinositol (PtdIns) phosphatase that specifically hydrolyzes the 5-phosphate of phosphatidylinositol-3,4,5-trisphosphate (PtdIns(3,4,5)P3), phosphatidylinositol 4,5-bisphosphate (PtdIns(4,5)P2) and phosphatidylinositol 3,5-bisphosphate (PtdIns(3,5)P2). Specific for lipid substrates, inactive towards water soluble inositol phosphates. Plays an essential role in the primary cilium by controlling ciliary growth and phosphoinositide 3-kinase (PI3K) signaling and stability. This chain is Phosphatidylinositol polyphosphate 5-phosphatase type IV (INPP5E), found in Homo sapiens (Human).